The primary structure comprises 27 residues: WDVNDCIHFCLIGVVGRSYTECHTMCT.

Intrachain disulfides connect cysteine 6-cysteine 26 and cysteine 10-cysteine 22.

As to expression, expressed by the venom duct.

The protein resides in the secreted. The polypeptide is Conotoxin flf14b (Conus anabathrum floridanus (Florida cone)).